Here is a 413-residue protein sequence, read N- to C-terminus: GTPase HflX (413 aa).

One can recognise a Hflx-type G domain in the interval 200–386 (VRVALVGYTN…KVYETVREIH (187 aa)). Residues 206–213 (GYTNVGKS), 231–235 (FATLD), 252–255 (DTVG), 318–321 (NKID), and 364–366 (SAT) each bind GTP. The Mg(2+) site is built by serine 213 and threonine 233.

It belongs to the TRAFAC class OBG-HflX-like GTPase superfamily. HflX GTPase family. Monomer. Associates with the 50S ribosomal subunit. Mg(2+) is required as a cofactor.

It localises to the cytoplasm. Its function is as follows. GTPase that associates with the 50S ribosomal subunit and may have a role during protein synthesis or ribosome biogenesis. The protein is GTPase HflX of Flavobacterium psychrophilum (strain ATCC 49511 / DSM 21280 / CIP 103535 / JIP02/86).